Consider the following 400-residue polypeptide: PHD finger protein 24 (400 aa).

The N-myristoyl glycine moiety is linked to residue glycine 2. The interval 30-108 (DRPSIRRTGE…FTPPAFIRPT (79 aa)) is disordered. Residue arginine 36 is modified to Omega-N-methylarginine. The residue at position 43 (serine 43) is a Phosphoserine. At threonine 47 the chain carries Phosphothreonine. Serine 51 carries the post-translational modification Phosphoserine. Residues 78-97 (AWERLRDGRGVEPEEFDRTG) show a composition bias toward basic and acidic residues. A PHD-type zinc finger spans residues 129–190 (NDEMCDVCEV…TGWSCHYCDN (62 aa)).

This is PHD finger protein 24 from Pongo abelii (Sumatran orangutan).